The following is a 96-amino-acid chain: MNNETKFTPKDLDEELVKAKMLERMHDVIETAISKGFSAREALEIMTREIHLIRDEVLLHNKKAHNNIVCRELGVDDSAVIPQRQYLCALMRGSRH.

This sequence belongs to the mulikevirus gp14 protein family.

It is found in the host cytoplasm. This is an uncharacterized protein from Escherichia coli (Bacteriophage D108).